Here is a 204-residue protein sequence, read N- to C-terminus: uncharacterized protein (204 aa).

Residues 1–20 (MQNPLPEVMSPEHDKRTTTP) form a disordered region.

This is an uncharacterized protein from Frog virus 3 (isolate Goorha) (FV-3).